Here is a 623-residue protein sequence, read N- to C-terminus: Serine/threonine-protein kinase MAK (623 aa).

The region spanning 4–284 (YTTMRQLGDG…ASQALKHPYF (281 aa)) is the Protein kinase domain. Residues 10–18 (LGDGTYGSV) and lysine 33 contribute to the ATP site. The Proton acceptor role is filled by aspartate 125. Position 157 is a phosphothreonine; by autocatalysis (threonine 157). Phosphotyrosine; by autocatalysis is present on tyrosine 159. Disordered stretches follow at residues 328-396 (IDQV…RRRW) and 416-469 (GASH…SDSE). The segment covering 356 to 369 (QQPPKQQSQEKPPQ) has biased composition (low complexity). The span at 446-455 (SGSNHSTGEN) shows a compositional bias: polar residues.

It belongs to the protein kinase superfamily. CMGC Ser/Thr protein kinase family. CDC2/CDKX subfamily. As to quaternary structure, interacts with RP1. Interacts with AR and CDK20. Found in a complex containing MAK, AR and NCOA3. Interacts with FZR1 (via WD repeats). Mg(2+) is required as a cofactor. Post-translationally, autophosphorylated. Phosphorylated on serine and threonine residues. As to expression, expressed in prostate cancer cell lines at generally higher levels than in normal prostate epithelial cell lines. Isoform 1 is expressed in kidney, testis, lung, trachea, and retina. Isoform 2 is retina-specific where it is expressed in rod and cone photoreceptors.

The protein resides in the nucleus. The protein localises to the cytoplasm. It is found in the cytoskeleton. It localises to the microtubule organizing center. Its subcellular location is the centrosome. The protein resides in the spindle. The protein localises to the midbody. It is found in the cell projection. It localises to the cilium. Its subcellular location is the photoreceptor outer segment. The protein resides in the photoreceptor inner segment. It catalyses the reaction L-seryl-[protein] + ATP = O-phospho-L-seryl-[protein] + ADP + H(+). The enzyme catalyses L-threonyl-[protein] + ATP = O-phospho-L-threonyl-[protein] + ADP + H(+). Essential for the regulation of ciliary length and required for the long-term survival of photoreceptors. Phosphorylates FZR1 in a cell cycle-dependent manner. Plays a role in the transcriptional coactivation of AR. Could play an important function in spermatogenesis. May play a role in chromosomal stability in prostate cancer cells. This Homo sapiens (Human) protein is Serine/threonine-protein kinase MAK (MAK).